An 853-amino-acid polypeptide reads, in one-letter code: Cytochrome P450 monooxygenase mpaDE' (853 aa).

Residues 1–6 are Lumenal-facing; the sequence is MESLSL. Residues 7-29 form a helical membrane-spanning segment; that stretch reads TWITAIAVVLYLVQRYVRSYWRL. At 30 to 853 the chain is on the cytoplasmic side; sequence KDIPGPVLAK…DIENAIEGQK (824 aa). Heme is bound at residue Cys449.

This sequence belongs to the cytochrome P450 family. Heme is required as a cofactor.

It is found in the endoplasmic reticulum membrane. It catalyses the reaction 5-methylorsellinate + reduced [NADPH--hemoprotein reductase] + O2 = 4,6-dihydroxy-2-(hydroxymethyl)-3-methylbenzoate + oxidized [NADPH--hemoprotein reductase] + H2O + H(+). It carries out the reaction 4,6-dihydroxy-2-(hydroxymethyl)-3-methylbenzoate + H(+) = 5,7-dihydroxy-4-methylphthalide + H2O. Its pathway is secondary metabolite biosynthesis; terpenoid biosynthesis. Functionally, cytochrome P450 monooxygenase; part of the gene cluster that mediates the biosynthesis of mycophenolic acid (MPA), the first isolated antibiotic natural product in the world obtained from a culture of Penicillium brevicompactum in 1893. MpaDE' is an endoplasmic reticulum-bound enzyme that catalyzes the conversion of 5-methylorsellinic acid (5MOA) into the phthalide compound 5,7-dihydroxy-4,6-dimethylphthalide (DHMP). MpaDE' first catalyzes hydroxylation of 5-MOA to 4,6-dihydroxy-2-(hydroxymethyl)-3-methylbenzoic acid (DHMB), and then acts as a lactone synthase that catalyzes the ring closure to convert DHMB into DHMP. The first step of the pathway is the synthesis of 5-methylorsellinic acid (5MOA) by the cytosolic polyketide synthase mpaC. 5MOA is then converted to the phthalide compound 5,7-dihydroxy-4,6-dimethylphthalide (DHMP) by the endoplasmic reticulum-bound cytochrome P450 monooxygenase mpaDE. MpaDE first catalyzes hydroxylation of 5-MOA to 4,6-dihydroxy-2-(hydroxymethyl)-3-methylbenzoic acid (DHMB). MpaDE then acts as a lactone synthase that catalyzes the ring closure to convert DHMB into DHMP. The next step is the prenylation of DHMP by the Golgi apparatus-associated prenyltransferase mpaA to yield farnesyl-DHMP (FDHMP). The ER-bound oxygenase mpaB then mediates the oxidative cleavage the C19-C20 double bond in FDHMP to yield FDHMP-3C via a mycophenolic aldehyde intermediate. The O-methyltransferase mpaG catalyzes the methylation of FDHMP-3C to yield MFDHMP-3C. After the cytosolic methylation of FDHMP-3C, MFDHMP-3C enters into peroxisomes probably via free diffusion due to its low molecular weight. Upon a peroxisomal CoA ligation reaction, catalyzed by a beta-oxidation component enzyme acyl-CoA ligase ACL891, MFDHMP-3C-CoA would then be restricted to peroxisomes for the following beta-oxidation pathway steps. The peroxisomal beta-oxidation machinery than converts MFDHMP-3C-CoA into MPA_CoA, via a beta-oxidation chain-shortening process. Finally mpaH acts as a peroxisomal acyl-CoA hydrolase with high substrate specificity toward MPA-CoA to release the final product MPA. This is Cytochrome P450 monooxygenase mpaDE' from Penicillium brevicompactum.